A 400-amino-acid polypeptide reads, in one-letter code: 1-deoxy-D-xylulose 5-phosphate reductoisomerase (400 aa).

NADPH contacts are provided by Thr-17, Gly-18, Ser-19, Ile-20, and Asn-131. Lys-132 contacts 1-deoxy-D-xylulose 5-phosphate. Glu-133 provides a ligand contact to NADPH. Residue Asp-157 participates in Mn(2+) binding. Positions 158, 159, 188, and 211 each coordinate 1-deoxy-D-xylulose 5-phosphate. Glu-159 contacts Mn(2+). Gly-217 is an NADPH binding site. The 1-deoxy-D-xylulose 5-phosphate site is built by Ser-224, Asn-229, Lys-230, and Glu-233. Glu-233 serves as a coordination point for Mn(2+).

It belongs to the DXR family. It depends on Mg(2+) as a cofactor. Mn(2+) serves as cofactor.

The catalysed reaction is 2-C-methyl-D-erythritol 4-phosphate + NADP(+) = 1-deoxy-D-xylulose 5-phosphate + NADPH + H(+). It participates in isoprenoid biosynthesis; isopentenyl diphosphate biosynthesis via DXP pathway; isopentenyl diphosphate from 1-deoxy-D-xylulose 5-phosphate: step 1/6. Functionally, catalyzes the NADPH-dependent rearrangement and reduction of 1-deoxy-D-xylulose-5-phosphate (DXP) to 2-C-methyl-D-erythritol 4-phosphate (MEP). The chain is 1-deoxy-D-xylulose 5-phosphate reductoisomerase from Pseudomonas putida (strain ATCC 47054 / DSM 6125 / CFBP 8728 / NCIMB 11950 / KT2440).